The sequence spans 185 residues: Elongation factor P (185 aa).

Belongs to the elongation factor P family.

It is found in the cytoplasm. It functions in the pathway protein biosynthesis; polypeptide chain elongation. In terms of biological role, involved in peptide bond synthesis. Stimulates efficient translation and peptide-bond synthesis on native or reconstituted 70S ribosomes in vitro. Probably functions indirectly by altering the affinity of the ribosome for aminoacyl-tRNA, thus increasing their reactivity as acceptors for peptidyl transferase. The chain is Elongation factor P from Streptococcus pyogenes serotype M49 (strain NZ131).